We begin with the raw amino-acid sequence, 369 residues long: 4-hydroxy-3-methylbut-2-en-1-yl diphosphate synthase (flavodoxin) (369 aa).

[4Fe-4S] cluster contacts are provided by Cys-270, Cys-273, Cys-305, and Glu-312.

This sequence belongs to the IspG family. The cofactor is [4Fe-4S] cluster.

It catalyses the reaction (2E)-4-hydroxy-3-methylbut-2-enyl diphosphate + oxidized [flavodoxin] + H2O + 2 H(+) = 2-C-methyl-D-erythritol 2,4-cyclic diphosphate + reduced [flavodoxin]. The protein operates within isoprenoid biosynthesis; isopentenyl diphosphate biosynthesis via DXP pathway; isopentenyl diphosphate from 1-deoxy-D-xylulose 5-phosphate: step 5/6. Its function is as follows. Converts 2C-methyl-D-erythritol 2,4-cyclodiphosphate (ME-2,4cPP) into 1-hydroxy-2-methyl-2-(E)-butenyl 4-diphosphate. This chain is 4-hydroxy-3-methylbut-2-en-1-yl diphosphate synthase (flavodoxin), found in Haemophilus ducreyi (strain 35000HP / ATCC 700724).